A 234-amino-acid polypeptide reads, in one-letter code: Large ribosomal subunit protein uL1 (234 aa).

This sequence belongs to the universal ribosomal protein uL1 family. Part of the 50S ribosomal subunit.

Its function is as follows. Binds directly to 23S rRNA. The L1 stalk is quite mobile in the ribosome, and is involved in E site tRNA release. Protein L1 is also a translational repressor protein, it controls the translation of the L11 operon by binding to its mRNA. This chain is Large ribosomal subunit protein uL1, found in Desulfosudis oleivorans (strain DSM 6200 / JCM 39069 / Hxd3) (Desulfococcus oleovorans).